A 192-amino-acid polypeptide reads, in one-letter code: Nucleotidase CA_C3379 (192 aa).

It belongs to the 5'(3')-deoxyribonucleotidase family. Mg(2+) serves as cofactor.

It catalyses the reaction sugar phosphate + H2O = sugar + phosphate.. Catalyzes the dephosphorylation of nucleotide monophosphates and of different sugar phosphates in vitro. This Clostridium acetobutylicum (strain ATCC 824 / DSM 792 / JCM 1419 / IAM 19013 / LMG 5710 / NBRC 13948 / NRRL B-527 / VKM B-1787 / 2291 / W) protein is Nucleotidase CA_C3379.